Here is a 156-residue protein sequence, read N- to C-terminus: Transcriptional regulator MraZ (156 aa).

2 SpoVT-AbrB domains span residues 7 to 54 and 84 to 127; these read NIEV…PESV and VEVV…AKER.

It belongs to the MraZ family. In terms of assembly, forms oligomers.

Its subcellular location is the cytoplasm. It localises to the nucleoid. This chain is Transcriptional regulator MraZ, found in Bacteroides thetaiotaomicron (strain ATCC 29148 / DSM 2079 / JCM 5827 / CCUG 10774 / NCTC 10582 / VPI-5482 / E50).